We begin with the raw amino-acid sequence, 194 residues long: Interferon alpha (194 aa).

The first 23 residues, 1–23 (MALPSSFLVALVALGCNSVCSLG), serve as a signal peptide directing secretion. 2 cysteine pairs are disulfide-bonded: cysteine 24–cysteine 123 and cysteine 52–cysteine 166. Asparagine 102 carries N-linked (GlcNAc...) asparagine glycosylation.

It belongs to the alpha/beta interferon family.

The protein resides in the secreted. Functionally, produced by macrophages, IFN-alpha have antiviral activities. Interferon stimulates the production of two enzymes: a protein kinase and an oligoadenylate synthetase. This Felis catus (Cat) protein is Interferon alpha.